The following is a 661-amino-acid chain: Vasorin (661 aa).

An N-terminal signal peptide occupies residues 1–19; it reads MWHLLVWIILLATAQQMIT. Residues 20–50 form the LRRNT domain; sequence EGCPAGCQCNTPQTVFCLARKNSNFPRSVPP. At 20-563 the chain is on the extracellular side; the sequence is EGCPAGCQCN…VTQSQEGNLT (544 aa). LRR repeat units lie at residues 52–72, 75–96, 99–120, 123–144, 147–168, 169–189, 191–212, 215–237, 238–258, and 259–281; these read TLNL…SFIG, GLHL…VFRN, NLSN…TFQG, RLER…AFKG, SLLE…SLPH, LLLL…VFNA, NIES…LLSG, NLHE…HGLT, KLNI…LSNL, and PALQ…LFRS. N99 carries an N-linked (GlcNAc...) asparagine glycan. In terms of domain architecture, LRRCT spans 293 to 346; sequence NPFNCVCSLGWLSEWMRVSGVVLLRPDETRCHFPPKNAGKTLRQLRDSEYGCPA. Positions 348–385 are enriched in low complexity; it reads TTIQMPSTMPPSTTTGPPTTTKHLQTEAPTTASTTTTT. Residues 348-395 form a disordered region; that stretch reads TTIQMPSTMPPSTTTGPPTTTKHLQTEAPTTASTTTTTIPHQEQEEDT. The EGF-like domain occupies 403–440; it reads EDTLCPPQTCLNGGSCHLDPTGQLECECPPGFQGTYCE. 3 disulfides stabilise this stretch: C407–C418, C412–C428, and C430–C439. The 89-residue stretch at 455 to 543 folds into the Fibronectin type-III domain; sequence EQVKIIEVTV…EEDLCTETHT (89 aa). N518 and N561 each carry an N-linked (GlcNAc...) asparagine glycan. The chain crosses the membrane as a helical span at residues 564 to 584; sequence LVLVPAVAAGILLSAAVAAAA. The Cytoplasmic portion of the chain corresponds to 585 to 661; it reads CYARRRKGKG…PTGRLPHSYF (77 aa). A disordered region spans residues 591–661; the sequence is KGKGHSVEDG…PTGRLPHSYF (71 aa). Over residues 606 to 623 the composition is skewed to basic and acidic residues; it reads DGVKKGLDGKGEVKKLSE.

It is found in the membrane. May act as an inhibitor of TGF-beta signaling. This is Vasorin (vasn) from Xenopus tropicalis (Western clawed frog).